We begin with the raw amino-acid sequence, 353 residues long: Methionine import ATP-binding protein MetN (353 aa).

Residues 8–249 (LDQIDVTFHQ…PKQPLTQDFI (242 aa)) enclose the ABC transporter domain. 42 to 49 (GYSGAGKS) lines the ATP pocket.

This sequence belongs to the ABC transporter superfamily. Methionine importer (TC 3.A.1.24) family. The complex is composed of two ATP-binding proteins (MetN), two transmembrane proteins (MetI) and a solute-binding protein (MetQ).

The protein resides in the cell membrane. The enzyme catalyses L-methionine(out) + ATP + H2O = L-methionine(in) + ADP + phosphate + H(+). It carries out the reaction D-methionine(out) + ATP + H2O = D-methionine(in) + ADP + phosphate + H(+). In terms of biological role, part of the ABC transporter complex MetNIQ involved in methionine import. Responsible for energy coupling to the transport system. The sequence is that of Methionine import ATP-binding protein MetN from Streptococcus pneumoniae serotype 4 (strain ATCC BAA-334 / TIGR4).